The following is a 60-amino-acid chain: Small ribosomal subunit protein bS21 (60 aa).

This sequence belongs to the bacterial ribosomal protein bS21 family.

The sequence is that of Small ribosomal subunit protein bS21 (rpsU) from Mycoplasma pneumoniae (strain ATCC 29342 / M129 / Subtype 1) (Mycoplasmoides pneumoniae).